A 37-amino-acid polypeptide reads, in one-letter code: Delta-amaurobitoxin-Pl1b (37 aa).

Intrachain disulfides connect cysteine 2–cysteine 18, cysteine 9–cysteine 23, cysteine 17–cysteine 33, and cysteine 25–cysteine 31. Residue serine 37 is modified to Serine amide.

It belongs to the neurotoxin 07 (Beta/delta-agtx) family. 02 (aga-3) subfamily. Expressed by the venom gland.

It is found in the secreted. Functionally, insecticidal toxin. Binds to site 4 of insect voltage-gated sodium channel (Nav) and inhibits channel inactivation. In vivo, it lethal to lepidopteran larvae. Has no adverse affects when intracerebroventricularly injected in mice at a dose of 0.2 ug, but causes reversible paralysis of legs when injected intracerebroventricularly in mice at a dose of 2.0 ug. The protein is Delta-amaurobitoxin-Pl1b of Pireneitega luctuosa (Tangled nest spider).